The chain runs to 657 residues: Putative GreA-associated domains protein (657 aa).

Residues 1–152 enclose the GRAD2 domain; that stretch reads MDTRDLTAYS…EQEGNKEKAT (152 aa). Residues 153–657 form the GRAD1 domain; sequence EFYKKALYRF…TAGSFGTLWE (505 aa).

In Treponema pallidum (strain Nichols), this protein is Putative GreA-associated domains protein.